Consider the following 166-residue polypeptide: Ubiquitin-fold modifier-conjugating enzyme 1 (166 aa).

C116 serves as the catalytic Glycyl thioester intermediate.

It belongs to the ubiquitin-conjugating enzyme family. UFC1 subfamily. In terms of assembly, interacts with UBA5 (via C-terminus). Interacts with UFL1. Interacts with UFM1.

Functionally, E2-like enzyme which specifically catalyzes the second step in ufmylation. Accepts the ubiquitin-like modifier UFM1 from the E1 enzyme UBA5 and forms an intermediate with UFM1 via a thioester linkage. Ufmylation is involved in various processes, such as ribosome recycling, response to DNA damage, interferon response or reticulophagy (also called ER-phagy). The chain is Ubiquitin-fold modifier-conjugating enzyme 1 (ufc1) from Danio rerio (Zebrafish).